The chain runs to 134 residues: Protein PsiB (134 aa).

Its function is as follows. Could be involved directly or indirectly in exopolysaccharide synthesis. This Rhizobium leguminosarum bv. phaseoli protein is Protein PsiB (psiB).